The sequence spans 154 residues: MAL-like protein (154 aa).

4 helical membrane passes run 24–44 (LFLTIPFAFFLPELVFGFWVW), 61–81 (VLYVSLTSFLISLMFLMSYLF), 99–119 (GTTGILYMSASVLQAYATIIS), and 131–151 (VAASFFAFLTTLLYILHAFSI). The 131-residue stretch at 24-154 (LFLTIPFAFF…ILHAFSIYYH (131 aa)) folds into the MARVEL domain.

It belongs to the MAL family.

The protein resides in the membrane. This Mus musculus (Mouse) protein is MAL-like protein (Mall).